We begin with the raw amino-acid sequence, 230 residues long: Early E1A protein (230 aa).

An interaction with RB1 in competition with E2F1 region spans residues 40–48 (PSLHDLFDL). Positions 106 to 110 (LLCLE) match the LXCXE motif, interaction with host RB1 motif. Residues 145-163 (CLRCAYYQEQGENSICGLC) fold into a zinc finger. The disordered stretch occupies residues 189–230 (KPGSRKRSAVTSRGSVESSKRPCLPEPEQTEPLDLSLKPRPQ). The short motif at 220 to 224 (PLDLS) is the PXDLS motif, CTBP-binding element. The Nuclear localization signal signature appears at 226-230 (KPRPQ).

The protein belongs to the adenoviridae E1A protein family. In terms of assembly, interacts with host UBE2I; this interaction interferes with polySUMOylation. Interacts with host RB1; this interaction induces the aberrant dissociation of RB1-E2F1 complex thereby disrupting the activity of RB1 and activating E2F1-regulated genes. Interacts with host ATF7; the interaction enhances ATF7-mediated viral transactivation activity which requires the zinc binding domains of both proteins. Isoform early E1A 32 kDa protein and isoform early E1A 26 kDa protein interact (via N-terminus) with CUL1 and E3 ubiquitin ligase RBX1; these interactions inhibit RBX1-CUL1-dependent elongation reaction of ubiquitin chains and attenuate ubiquitination of SCF(FBXW7) target proteins. Interacts (via PXLXP motif) with host ZMYND11/BS69 (via MYND-type zinc finger); this interaction inhibits E1A mediated transactivation. Interacts with host EP300; this interaction stimulates the acetylation of RB1 by recruiting EP300 and RB1 into a multimeric-protein complex. Interacts with host CTBP1 and CTBP2; this interaction seems to potentiate viral replication. Interacts with host DCAF7. Interacts with host DYRK1A. Interacts with host KPNA4; this interaction allows E1A import into the host nucleus. Interacts with host EP400; this interaction stabilizes MYC. Interacts with host TBP protein; this interaction probably disrupts the TBP-TATA complex.

It is found in the host nucleus. In terms of biological role, plays a role in viral genome replication by driving entry of quiescent cells into the cell cycle. Stimulation of progression from G1 to S phase allows the virus to efficiently use the cellular DNA replicating machinery to achieve viral genome replication. E1A protein has both transforming and trans-activating activities. Induces the disassembly of the E2F1 transcription factor from RB1 by direct competition for the same binding site on RB1, with subsequent transcriptional activation of E2F1-regulated S-phase genes and of the E2 region of the adenoviral genome. Release of E2F1 leads to the ARF-mediated inhibition of MDM2 and causes TP53/p53 to accumulate because it is not targeted for degradation by MDM2-mediated ubiquitination anymore. This increase in TP53, in turn, would arrest the cell proliferation and direct its death but this effect is counteracted by the viral protein E1B-55K. Inactivation of the ability of RB1 to arrest the cell cycle is critical for cellular transformation, uncontrolled cellular growth and proliferation induced by viral infection. Interaction with RBX1 and CUL1 inhibits ubiquitination of the proteins targeted by SCF(FBXW7) ubiquitin ligase complex, and may be linked to unregulated host cell proliferation. The tumorigenesis-restraining activity of E1A may be related to the disruption of the host CtBP-CtIP complex through the CtBP binding motif. In Canine adenovirus serotype 1 (strain CLL) (CAdV-1), this protein is Early E1A protein.